A 248-amino-acid chain; its full sequence is Tyrosine recombinase XerD-like (248 aa).

The Core-binding (CB) domain maps to 1 to 72 (MKSYIEPFIA…TANQFLYYLY (72 aa)). The Tyr recombinase domain maps to 85-248 (DTMKVMRTEK…PVTLEKYYKS (164 aa)). Residues Lys-149 and Arg-213 contribute to the active site. The active-site O-(3'-phospho-DNA)-tyrosine intermediate is Tyr-245.

Belongs to the 'phage' integrase family. XerD-like subfamily.

It is found in the cytoplasm. In terms of biological role, putative tyrosine recombinase. Not involved in the cutting and rejoining of the recombining DNA molecules on dif(SL) site. The polypeptide is Tyrosine recombinase XerD-like (Streptococcus pyogenes serotype M3 (strain ATCC BAA-595 / MGAS315)).